We begin with the raw amino-acid sequence, 356 residues long: MLYLIAEWLGFEGALNLIRYQTFRTGATLMTALVIGLIIGPRFINMLRVRQGKGQPIRDDGPQSHLAKRGTPTMGGLMIIVSLVLSLVLWMDLRSPFVWACLAVTVGFGLIGFLDDLDKVTKNSHRGVSAKVRLLMEFLVAGIASYIIVSQINTWLYVPFVSDRAIPLGPFYYVFAAVVIVGAGNAVNLTDGLDGLAIMPVIIAAGTFAIIAYLAGRVDYSEYLGIPHVPGAGELAIFCAAIMGAGLAFLWFNAPPAAVFMGDTGSLALGGALGAIAVASHHEIVLAIVGGLFVFEALSVIIQVFWFKRTGKRVFRMAPIHHHFEQLGWSESKVVIRFWIVSIVLALMGLATLKLR.

10 consecutive transmembrane segments (helical) span residues Ala-27–Leu-47, Thr-73–Leu-93, Phe-97–Leu-117, Phe-138–Val-158, Ala-165–Asn-185, Gly-195–Ala-215, Ala-232–Phe-252, Ala-258–Val-278, Ile-284–Val-304, and Lys-333–Leu-353.

Belongs to the glycosyltransferase 4 family. MraY subfamily. Mg(2+) serves as cofactor.

Its subcellular location is the cell inner membrane. It carries out the reaction UDP-N-acetyl-alpha-D-muramoyl-L-alanyl-gamma-D-glutamyl-meso-2,6-diaminopimeloyl-D-alanyl-D-alanine + di-trans,octa-cis-undecaprenyl phosphate = di-trans,octa-cis-undecaprenyl diphospho-N-acetyl-alpha-D-muramoyl-L-alanyl-D-glutamyl-meso-2,6-diaminopimeloyl-D-alanyl-D-alanine + UMP. Its pathway is cell wall biogenesis; peptidoglycan biosynthesis. Functionally, catalyzes the initial step of the lipid cycle reactions in the biosynthesis of the cell wall peptidoglycan: transfers peptidoglycan precursor phospho-MurNAc-pentapeptide from UDP-MurNAc-pentapeptide onto the lipid carrier undecaprenyl phosphate, yielding undecaprenyl-pyrophosphoryl-MurNAc-pentapeptide, known as lipid I. This chain is Phospho-N-acetylmuramoyl-pentapeptide-transferase, found in Erythrobacter litoralis (strain HTCC2594).